The primary structure comprises 351 residues: MVDIRDVEVIAPNFKQRLSGVTSTIIQLVPVQRALGQKIAVLGPGLPKSLPSVRFRDLIHLWKRPEGRPCRVWHARRNVEMLPAILLRDLLRMKLRIVFTSASQRRHTGWSKFLIRRMDAVIATSGRTAAYLDVPNTVILHGIDTKRFQPPFDKTEAKKALGLDPAKKFVGCFGRVRHQKGTDLFVDSMIALLPCRPDWGAIVAGRATGPHLAFESELKERVAKAGLADRILFVGEHTNIPDWYRALDLFVAPQRWEGFGLTPLEAMATGVPVVATDVGAFSELVTGGSEETGLIIAADDLKAMVDAAAAFMDDRPRLAAASANGLARTSKNFAIEQEARAIAAVYESLMR.

Belongs to the glycosyltransferase group 1 family. Glycosyltransferase 4 subfamily.

The protein operates within bacterial outer membrane biogenesis; LPS core biosynthesis. In terms of biological role, acts at transfer of mannose group to a 3-deoxy-D-mono octulonic acid (KDO) via an alpha-1,5 linkage. The chain is Lipopolysaccharide core biosynthesis mannosyltransferase LpsB (lpsB) from Rhizobium meliloti (strain 1021) (Ensifer meliloti).